We begin with the raw amino-acid sequence, 115 residues long: Large ribosomal subunit protein bL20 (115 aa).

Belongs to the bacterial ribosomal protein bL20 family.

Binds directly to 23S ribosomal RNA and is necessary for the in vitro assembly process of the 50S ribosomal subunit. It is not involved in the protein synthesizing functions of that subunit. The chain is Large ribosomal subunit protein bL20 from Pelodictyon phaeoclathratiforme (strain DSM 5477 / BU-1).